A 72-amino-acid chain; its full sequence is Cytochrome b-c1 complex subunit 9 (72 aa).

The Mitochondrial matrix portion of the chain corresponds to 1–27 (MESAARRSGGGVLEGFYRLVMRRTPVY). The helical transmembrane segment at 28 to 53 (VTFVIAGALLGERAVDYGVKTLWEKN) threads the bilayer. Over 54 to 72 (NVGKRYEDISVLGQRPVDE) the chain is Mitochondrial intermembrane.

Belongs to the UQCR10/QCR9 family. As to quaternary structure, component of the ubiquinol-cytochrome c oxidoreductase (cytochrome b-c1 complex, complex III, CIII), a multisubunit enzyme composed of 3 respiratory subunits cytochrome b, cytochrome c1 and Rieske protein, 2 core protein subunits, and additional low-molecular weight protein subunits. The complex exists as an obligatory dimer and forms supercomplexes (SCs) in the inner mitochondrial membrane with cytochrome c oxidase (complex IV, CIV).

The protein localises to the mitochondrion inner membrane. Functionally, component of the ubiquinol-cytochrome c oxidoreductase, a multisubunit transmembrane complex that is part of the mitochondrial electron transport chain which drives oxidative phosphorylation. The respiratory chain contains 3 multisubunit complexes succinate dehydrogenase (complex II, CII), ubiquinol-cytochrome c oxidoreductase (cytochrome b-c1 complex, complex III, CIII) and cytochrome c oxidase (complex IV, CIV), that cooperate to transfer electrons derived from NADH and succinate to molecular oxygen, creating an electrochemical gradient over the inner membrane that drives transmembrane transport and the ATP synthase. The cytochrome b-c1 complex catalyzes electron transfer from ubiquinol to cytochrome c, linking this redox reaction to translocation of protons across the mitochondrial inner membrane, with protons being carried across the membrane as hydrogens on the quinol. In the process called Q cycle, 2 protons are consumed from the matrix, 4 protons are released into the intermembrane space and 2 electrons are passed to cytochrome c. The protein is Cytochrome b-c1 complex subunit 9 of Solanum tuberosum (Potato).